The sequence spans 271 residues: Ferric enterobactin transport ATP-binding protein FepC (271 aa).

The 237-residue stretch at Leu8–Arg244 folds into the ABC transporter domain. Gly40–Ser47 serves as a coordination point for ATP.

The protein belongs to the ABC transporter superfamily. The complex is composed of two ATP-binding proteins (FepC), two transmembrane proteins (FepD and FepG) and a solute-binding protein (FepB).

It localises to the cell inner membrane. It carries out the reaction Fe(III)-enterobactin(out) + ATP + H2O = Fe(III)-enterobactin(in) + ADP + phosphate + H(+). Its function is as follows. Part of the ABC transporter complex FepBDGC involved in ferric enterobactin uptake. Responsible for energy coupling to the transport system. This chain is Ferric enterobactin transport ATP-binding protein FepC (fepC), found in Escherichia coli (strain K12).